Consider the following 538-residue polypeptide: Casein kinase I homolog 1 (538 aa).

The disordered stretch occupies residues 39–61 (SPARSSMTATTAANSNSNSSRDD). Residues 41–57 (ARSSMTATTAANSNSNS) show a composition bias toward low complexity. The 285-residue stretch at 69–353 (YKIGKKIGEG…ETADGQYDWM (285 aa)) folds into the Protein kinase domain. Residues 75–83 (IGEGSFGVL) and K98 contribute to the ATP site. Catalysis depends on D188, which acts as the Proton acceptor. Disordered regions lie at residues 366–428 (NKKP…KPKL) and 474–527 (QQQL…LAAS). 2 stretches are compositionally biased toward low complexity: residues 391-410 (QLQM…QQQQ) and 474-498 (QQQL…QFGA). Residues S522, S523, and S527 each carry the phosphoserine modification. 2 S-palmitoyl cysteine lipidation sites follow: C537 and C538.

This sequence belongs to the protein kinase superfamily. CK1 Ser/Thr protein kinase family. Casein kinase I subfamily. Post-translationally, palmitoylated by AKR1.

It is found in the cell membrane. Its subcellular location is the mitochondrion membrane. It carries out the reaction L-seryl-[protein] + ATP = O-phospho-L-seryl-[protein] + ADP + H(+). The enzyme catalyses L-threonyl-[protein] + ATP = O-phospho-L-threonyl-[protein] + ADP + H(+). Functionally, casein kinases are operationally defined by their preferential utilization of acidic proteins such as caseins as substrates. The sequence is that of Casein kinase I homolog 1 (YCK1) from Saccharomyces cerevisiae (strain ATCC 204508 / S288c) (Baker's yeast).